The following is a 1017-amino-acid chain: Fanconi-associated nuclease 1 (1017 aa).

Residues 1–10 (MMSEGKPPDK) are compositionally biased toward basic and acidic residues. The interval 1–23 (MMSEGKPPDKKRPRRSLSISKNK) is disordered. The span at 11-23 (KRPRRSLSISKNK) shows a compositional bias: basic residues. Residues 14-22 (RRSLSISKN) carry the D-box motif. The segment at 41-69 (KLACPVCSKMVPRYDLNRHLDEMCANNDF) adopts a UBZ4-type zinc-finger fold. 4 residues coordinate Zn(2+): Cys-44, Cys-47, His-59, and Cys-64. Disordered stretches follow at residues 95-121 (EDVT…KREV) and 170-189 (IDKD…STVV). Over residues 179–189 (SSPQSSKSTVV) the composition is skewed to polar residues. Residue Ser-180 is modified to Phosphoserine. The KEN box signature appears at 212-214 (KEN). A coiled-coil region spans residues 671–696 (SRFVEILQRLHMYEEAVRELESLLSQ). Glu-834, Asp-960, Glu-975, and Val-976 together coordinate Mn(2+). In terms of domain architecture, VRR-NUC spans 895 to 1007 (EESLRAWVAA…GAEVEVCHVV (113 aa)).

Belongs to the FAN1 family. As to quaternary structure, interacts with FANCD2 (when monoubiquitinated). Interacts with FANCI, MLH1, MLH3 and PMS2. The cofactor is Mn(2+). Mg(2+) is required as a cofactor. In terms of processing, ubiquitinated and degraded during mitotic exit by the APC/C-Cdh1 complex.

The protein localises to the nucleus. It catalyses the reaction Hydrolytically removes 5'-nucleotides successively from the 3'-hydroxy termini of 3'-hydroxy-terminated oligonucleotides.. Nuclease required for the repair of DNA interstrand cross-links (ICL) recruited at sites of DNA damage by monoubiquitinated FANCD2. Specifically involved in repair of ICL-induced DNA breaks by being required for efficient homologous recombination, probably in the resolution of homologous recombination intermediates. Not involved in DNA double-strand breaks resection. Acts as a 5'-3' exonuclease that anchors at a cut end of DNA and cleaves DNA successively at every third nucleotide, allowing to excise an ICL from one strand through flanking incisions. Probably keeps excising with 3'-flap annealing until it reaches and unhooks the ICL. Acts at sites that have a 5'-terminal phosphate anchor at a nick or a 1- or 2-nucleotide flap and is augmented by a 3' flap. Also has endonuclease activity toward 5'-flaps. The protein is Fanconi-associated nuclease 1 of Homo sapiens (Human).